The chain runs to 301 residues: Probable alpha-L-glutamate ligase (301 aa).

In terms of domain architecture, ATP-grasp spans 104–287 (LQLLSRRGVG…IASQIIAFIE (184 aa)). ATP contacts are provided by residues Lys141, 178–179 (EF), Asp187, and 211–213 (RSN). Residues Asp248, Glu260, and Asn262 each coordinate Mg(2+). Asp248, Glu260, and Asn262 together coordinate Mn(2+).

The protein belongs to the RimK family. Requires Mg(2+) as cofactor. Mn(2+) is required as a cofactor.

This chain is Probable alpha-L-glutamate ligase, found in Hydrogenovibrio crunogenus (strain DSM 25203 / XCL-2) (Thiomicrospira crunogena).